The sequence spans 631 residues: tRNA uridine 5-carboxymethylaminomethyl modification enzyme MnmG (631 aa).

Residues 15–20 (GGGHAG), V127, and S182 contribute to the FAD site. 275–289 (GPRYCPSIEDKIVRF) provides a ligand contact to NAD(+). Q372 contributes to the FAD binding site.

It belongs to the MnmG family. Homodimer. Heterotetramer of two MnmE and two MnmG subunits. It depends on FAD as a cofactor.

The protein localises to the cytoplasm. In terms of biological role, NAD-binding protein involved in the addition of a carboxymethylaminomethyl (cmnm) group at the wobble position (U34) of certain tRNAs, forming tRNA-cmnm(5)s(2)U34. The chain is tRNA uridine 5-carboxymethylaminomethyl modification enzyme MnmG from Buchnera aphidicola subsp. Schizaphis graminum (strain Sg).